A 101-amino-acid chain; its full sequence is Urease subunit beta (101 aa).

This sequence belongs to the urease beta subunit family. As to quaternary structure, heterotrimer of UreA (gamma), UreB (beta) and UreC (alpha) subunits. Three heterotrimers associate to form the active enzyme.

The protein resides in the cytoplasm. The enzyme catalyses urea + 2 H2O + H(+) = hydrogencarbonate + 2 NH4(+). Its pathway is nitrogen metabolism; urea degradation; CO(2) and NH(3) from urea (urease route): step 1/1. The chain is Urease subunit beta from Polaromonas naphthalenivorans (strain CJ2).